Reading from the N-terminus, the 664-residue chain is Threonine--tRNA ligase (664 aa).

Residues M1 to T64 form the TGS domain. Positions D250–P559 are catalytic. Residues C355, H406, and H536 each contribute to the Zn(2+) site.

The protein belongs to the class-II aminoacyl-tRNA synthetase family. As to quaternary structure, homodimer. Zn(2+) serves as cofactor.

The protein localises to the cytoplasm. It catalyses the reaction tRNA(Thr) + L-threonine + ATP = L-threonyl-tRNA(Thr) + AMP + diphosphate + H(+). Functionally, catalyzes the attachment of threonine to tRNA(Thr) in a two-step reaction: L-threonine is first activated by ATP to form Thr-AMP and then transferred to the acceptor end of tRNA(Thr). Also edits incorrectly charged L-seryl-tRNA(Thr). In Novosphingobium aromaticivorans (strain ATCC 700278 / DSM 12444 / CCUG 56034 / CIP 105152 / NBRC 16084 / F199), this protein is Threonine--tRNA ligase.